The chain runs to 88 residues: MNMSKQPVSNVRAIQANINIPMGAFRPGAGQPPRRKECTPEVEEGVPPTSDEEKKPIPGAKKLPGPAVNLSEIQNIKSELKYVPKAEQ.

The tract at residues 22-66 (MGAFRPGAGQPPRRKECTPEVEEGVPPTSDEEKKPIPGAKKLPGP) is disordered.

The protein belongs to the SMPX family. As to expression, preferentially and abundantly expressed in heart and skeletal muscle.

In terms of biological role, plays a role in the regulatory network through which muscle cells coordinate their structural and functional states during growth, adaptation, and repair. The protein is Small muscular protein (SMPX) of Homo sapiens (Human).